A 288-amino-acid chain; its full sequence is uncharacterized protein (288 aa).

The first 27 residues, 1–27, serve as a signal peptide directing secretion; the sequence is MKFEFRTLVLISLAVVVVLSGCSQSPS. Residues 144–167 are disordered; sequence GESGEAGGAGEQLPASDQASGEEP.

This is an uncharacterized protein from Archaeoglobus fulgidus (strain ATCC 49558 / DSM 4304 / JCM 9628 / NBRC 100126 / VC-16).